Consider the following 403-residue polypeptide: Protein-glutamate methylesterase/protein-glutamine glutaminase (403 aa).

The region spanning 8 to 126 (AVLIVDDSAL…SAHLRTVSRK (119 aa)) is the Response regulatory domain. Position 59 is a 4-aspartylphosphate (D59). Residues 204–393 (PLRESGALQI…VSLDDMAATI (190 aa)) enclose the CheB-type methylesterase domain. Residues S219, H246, and D342 contribute to the active site.

The protein belongs to the CheB family. Phosphorylated by CheA. Phosphorylation of the N-terminal regulatory domain activates the methylesterase activity.

The protein localises to the cytoplasm. It catalyses the reaction [protein]-L-glutamate 5-O-methyl ester + H2O = L-glutamyl-[protein] + methanol + H(+). The catalysed reaction is L-glutaminyl-[protein] + H2O = L-glutamyl-[protein] + NH4(+). In terms of biological role, involved in chemotaxis. Part of a chemotaxis signal transduction system that modulates chemotaxis in response to various stimuli. Catalyzes the demethylation of specific methylglutamate residues introduced into the chemoreceptors (methyl-accepting chemotaxis proteins or MCP) by CheR. Also mediates the irreversible deamidation of specific glutamine residues to glutamic acid. In Treponema pallidum (strain Nichols), this protein is Protein-glutamate methylesterase/protein-glutamine glutaminase.